The primary structure comprises 431 residues: Dihydroorotase (431 aa).

Positions 59 and 61 each coordinate Zn(2+). Substrate contacts are provided by residues 61–63 (HLR) and N93. Residues D151, H178, H231, and D304 each contribute to the Zn(2+) site. D304 is a catalytic residue. Residues H308 and 322–323 (FG) each bind substrate.

It belongs to the metallo-dependent hydrolases superfamily. DHOase family. Class I DHOase subfamily. Zn(2+) serves as cofactor.

It catalyses the reaction (S)-dihydroorotate + H2O = N-carbamoyl-L-aspartate + H(+). It functions in the pathway pyrimidine metabolism; UMP biosynthesis via de novo pathway; (S)-dihydroorotate from bicarbonate: step 3/3. In terms of biological role, catalyzes the reversible cyclization of carbamoyl aspartate to dihydroorotate. The chain is Dihydroorotase from Thermoanaerobacter sp. (strain X514).